The primary structure comprises 326 residues: Probable cell division protein WhiA (326 aa).

Residues 275-308 constitute a DNA-binding region (H-T-H motif); the sequence is SLDELGRLADPPMTKDAIAGRIRRLLAMADKRAL.

This sequence belongs to the WhiA family.

Functionally, involved in cell division and chromosome segregation. The polypeptide is Probable cell division protein WhiA (Paenarthrobacter aurescens (strain TC1)).